The following is an 86-amino-acid chain: Serine protease inhibitor Kazal-type 2 (86 aa).

The signal sequence occupies residues 1 to 16; that stretch reads MLRLVLLLLVTDFAAS. In terms of domain architecture, Kazal-like spans 32 to 86; it reads QFRTPDCGHFDFPACPRNLNPVCGTDMNTYSNECTLCMKIREDGSHINIIKDEPC. 3 cysteine pairs are disulfide-bonded: Cys38/Cys68, Cys46/Cys65, and Cys54/Cys86.

In terms of tissue distribution, expressed in sperm (at protein level). Expressed in testis but not in ovary, brain, heart, kidney or lung. Within testis, expressed in epididymis and germ cells.

It localises to the secreted. The protein localises to the cytoplasmic vesicle. It is found in the secretory vesicle. Its subcellular location is the acrosome. In terms of biological role, as a strong inhibitor of acrosin, it is required for normal spermiogenesis. It probably hinders premature activation of proacrosin and other proteases, thus preventing the cascade of events leading to spermiogenesis defects. May be involved in the regulation of serine protease-dependent germ cell apoptosis. It also inhibits trypsin. In Mus musculus (Mouse), this protein is Serine protease inhibitor Kazal-type 2 (Spink2).